The chain runs to 111 residues: Cell division protein FtsL (111 aa).

The Cytoplasmic portion of the chain corresponds to 1–26 (MAQARTEFSKVAAPRKLEEMYAQRGD). The chain crosses the membrane as a helical span at residues 27-47 (LFPYLLAVLVLLTLVSVFHVW). The Periplasmic portion of the chain corresponds to 48 to 111 (SRVRVVDLNL…PTDQQVVVVK (64 aa)). Positions 51–85 (RVVDLNLEVAEVARQLKVAQEEQNRLKLEVASLKT) form a coiled coil.

Belongs to the FtsL family.

The protein resides in the cell inner membrane. Essential cell division protein. This is Cell division protein FtsL from Geobacter sulfurreducens (strain ATCC 51573 / DSM 12127 / PCA).